The primary structure comprises 255 residues: 14-3-3 protein epsilon (255 aa).

Met1 carries the post-translational modification N-acetylmethionine. Lys50 is subject to N6-acetyllysine; alternate. Lys50 is covalently cross-linked (Glycyl lysine isopeptide (Lys-Gly) (interchain with G-Cter in SUMO2); alternate). Phosphoserine is present on Ser65. N6-acetyllysine occurs at positions 69, 118, and 123. Residue Tyr131 is modified to Phosphotyrosine. Thr137 carries the post-translational modification Phosphothreonine. The residue at position 210 (Ser210) is a Phosphoserine. Thr232 is modified (phosphothreonine). The interval Asp234–Gln255 is disordered.

The protein belongs to the 14-3-3 family. In terms of assembly, homodimer. Heterodimerizes with YWHAZ. Interacts with PKA-phosphorylated AANAT. Interacts with ABL1 (phosphorylated form); the interaction retains it in the cytoplasm. Interacts with ARHGEF28. Interacts with BEX3. Weakly interacts with CDKN1B. Interacts with the 'Thr-369' phosphorylated form of DAPK2. Interacts with DENND1A. Interacts with GAB2. Interacts with phosphorylated GRB10. Interacts with KSR1. Interacts with NDEL1. Interacts with PI4KB, TBC1D22A and TBC1D22B. Interacts with the phosphorylated (by AKT1) form of SRPK2. Interacts with TIAM2. Interacts with the 'Ser-1134' and 'Ser-1161' phosphorylated form of SOS1. Interacts with ZFP36 (via phosphorylated form). Interacts with SLITRK1. Interacts with HSF1 (via phosphorylated form); this interaction promotes HSF1 sequestration in the cytoplasm in a ERK-dependent manner. Interacts with RIPOR2. Interacts with KLHL22; required for the nuclear localization of KLHL22 upon amino acid starvation. Interacts with CRTC1. Interacts with CRTC2 (probably when phosphorylated at 'Ser-171'). Interacts with CRTC3 (probably when phosphorylated at 'Ser-162' and/or 'Ser-273'). Interacts with ATP2B1 and ATP2B3; this interaction inhibits calcium-transporting ATPase activity. Interacts with MEFV. Interacts with RNF115. Interacts with GPR15; this interaction promotes ER-to-Golgi transport of GPR15.

The protein localises to the nucleus. It is found in the cytoplasm. It localises to the melanosome. Adapter protein implicated in the regulation of a large spectrum of both general and specialized signaling pathways. Binds to a large number of partners, usually by recognition of a phosphoserine or phosphothreonine motif. Binding generally results in the modulation of the activity of the binding partner. Positively regulates phosphorylated protein HSF1 nuclear export to the cytoplasm. This Rattus norvegicus (Rat) protein is 14-3-3 protein epsilon (Ywhae).